The sequence spans 132 residues: Small ribosomal subunit protein uS8 (132 aa).

Belongs to the universal ribosomal protein uS8 family. Part of the 30S ribosomal subunit. Contacts proteins S5 and S12.

One of the primary rRNA binding proteins, it binds directly to 16S rRNA central domain where it helps coordinate assembly of the platform of the 30S subunit. This chain is Small ribosomal subunit protein uS8, found in Streptococcus pneumoniae (strain Taiwan19F-14).